The sequence spans 2453 residues: Tyrosine-protein phosphatase non-receptor type 13 (2453 aa).

The KIND domain maps to 3 to 190 (VSLAEALEVR…SGTDPLSRSS (188 aa)). The interval 183 to 227 (TDPLSRSSEQKPDRSQAIRDRLRGKGLPTGRSSTSDALDTHEAPL) is disordered. Over residues 190–205 (SEQKPDRSQAIRDRLR) the composition is skewed to basic and acidic residues. Position 240 is a phosphoserine (serine 240). The disordered stretch occupies residues 253–285 (EDYLKDTPSDNNSRHEDSETFSSPYQFKTSTPQ). Residues 256 to 270 (LKDTPSDNNSRHEDS) are compositionally biased toward basic and acidic residues. Positions 272-285 (TFSSPYQFKTSTPQ) are enriched in polar residues. Phosphoserine occurs at positions 297 and 298. The disordered stretch occupies residues 429-457 (SEASKRFESSSGLPGVDETGQTRPSRQYE). A compositionally biased stretch (polar residues) spans 447-457 (TGQTRPSRQYE). A coiled-coil region spans residues 458 to 493 (TSLEGNLINQDIMLRRQEEEMMQLQARMALRQSRLS). Residues 565–865 (RKVNIRLLSG…SQHKFQLQMR (301 aa)) form the FERM domain. Residues serine 883, serine 890, serine 901, serine 904, and serine 907 each carry the phosphoserine modification. Residues 944–957 (KEKTDKASWEEKPR) show a composition bias toward basic and acidic residues. Disordered stretches follow at residues 944–966 (KEKTDKASWEEKPRGMSKSYHDL) and 1007–1063 (LAGL…VPFK). A phosphoserine mark is found at serine 1021 and serine 1025. The segment covering 1025–1034 (SPERRNHESD) has biased composition (basic and acidic residues). The segment covering 1049-1058 (SLPSSGKSSS) has biased composition (low complexity). The residue at position 1076 (serine 1076) is a Phosphoserine. The PDZ 1 domain occupies 1084 to 1170 (LVNLKKDPKH…DVTLVISQPK (87 aa)). Disordered stretches follow at residues 1199-1356 (DSAM…GDTF) and 1441-1478 (GQVPTSRERDPAGPQSPPPDQDAQRQAPEKVAKQTPHV). Serine 1221 carries the phosphoserine modification. Polar residues-rich tracts occupy residues 1242–1252 (ESASLSQSQVN) and 1267–1279 (PQHSSPSPSVTTK). Phosphoserine is present on serine 1270. Positions 1297 to 1315 (GISDLIEHLDCADSDKDDS) are enriched in basic and acidic residues. Over residues 1331–1341 (SSSLSTSNKTS) the composition is skewed to low complexity. The PDZ 2 domain maps to 1357–1442 (EVELAKTDGS…VVHLLLEKGQ (86 aa)). Over residues 1467–1478 (APEKVAKQTPHV) the composition is skewed to basic and acidic residues. Residues 1491 to 1579 (EVKLFKNSSG…EVSLLLCRPA (89 aa)) enclose the PDZ 3 domain. The span at 1602-1629 (LNSSKETSQPSSSVEQGASSDDNGVSGK) shows a compositional bias: polar residues. Disordered regions lie at residues 1602 to 1662 (LNSS…AKMP) and 1695 to 1726 (KLESESSHPPPLDVSPGQTCQPPAECAPSDAT). Residues 1638 to 1655 (SRRESYSDHSESGEDDSV) show a composition bias toward basic and acidic residues. PDZ domains lie at 1764–1845 (LITL…GRIL) and 1857–1942 (LPDI…TRDG). 2 disordered regions span residues 1991–2024 (EAVCPAGEGSSSQMKESAGLTETKESNSRDDDIY) and 2051–2139 (RHAT…DPPF). A compositionally biased stretch (basic and acidic residues) spans 2012-2021 (ETKESNSRDD). Residues 2180-2434 (PSKELENLQE…VFCYQVILYV (255 aa)) enclose the Tyrosine-protein phosphatase domain. Substrate is bound by residues aspartate 2345, 2375-2381 (CSAGIGR), and glutamine 2419. The active-site Phosphocysteine intermediate is the cysteine 2375.

It belongs to the protein-tyrosine phosphatase family. Non-receptor class subfamily. In terms of assembly, interacts (via the first PDZ domain) with PLEKHA1 and PLEKHA2. Interacts (via the second PDZ domain) with TNFRSF6 (Fas receptor) (via C-terminus). Interacts (via the second PDZ domain) with TRIP6 (via the third LIM domain and C-terminus). Interacts (via the third PDZ domain) with NGFR (via C-terminal SVP motif) and PKN2 (via C-terminus). Interacts (via the second or fourth PDZ domains) with PDLIM4 (via C-terminus only or via combined C-terminus and LIM domain, but not LIM domain only). Found in a complex with PDLIM4 and TRIP6. Interacts with PDLIM4; this interaction results in dephosphorylation of SRC 'Tyr-419' by this protein leading to its inactivation. Interacts with BRD7. Interacts with RAPGEF6. Interacts with ARHGAP29. Interacts with PIK3R2; dephosphorylates PIK3R2. Interacts with FBXL2. Interacts (via the FERM domain) with ENTR1. Found in a complex with ENTR1, PTPN13 and GIT1. As to expression, expressed predominantly in kidney and, to a lesser extent, in lung, heart, brain and testis.

It localises to the cytoplasm. Its subcellular location is the cytoskeleton. The protein resides in the nucleus. The protein localises to the cell projection. It is found in the lamellipodium. It carries out the reaction O-phospho-L-tyrosyl-[protein] + H2O = L-tyrosyl-[protein] + phosphate. Functionally, tyrosine phosphatase which negatively regulates FAS-induced apoptosis and NGFR-mediated pro-apoptotic signaling. May regulate phosphoinositide 3-kinase (PI3K) signaling through dephosphorylation of PIK3R2. This is Tyrosine-protein phosphatase non-receptor type 13 (Ptpn13) from Mus musculus (Mouse).